The following is a 258-amino-acid chain: GTP cyclohydrolase FolE2 (258 aa).

It belongs to the GTP cyclohydrolase IV family.

The catalysed reaction is GTP + H2O = 7,8-dihydroneopterin 3'-triphosphate + formate + H(+). Its pathway is cofactor biosynthesis; 7,8-dihydroneopterin triphosphate biosynthesis; 7,8-dihydroneopterin triphosphate from GTP: step 1/1. In terms of biological role, converts GTP to 7,8-dihydroneopterin triphosphate. This Lawsonia intracellularis (strain PHE/MN1-00) protein is GTP cyclohydrolase FolE2.